Reading from the N-terminus, the 366-residue chain is Carbamoyl phosphate synthase small chain (366 aa).

A CPSase region spans residues 1 to 171 (MKKRKLILED…KPYVVPGRGL (171 aa)). 3 residues coordinate L-glutamine: S46, G220, and G222. In terms of domain architecture, Glutamine amidotransferase type-1 spans 172–359 (RVVMVDFGAK…LNLIKASKVK (188 aa)). The active-site Nucleophile is C247. 4 residues coordinate L-glutamine: L248, Q251, N289, and Y292. Residues H332 and E334 contribute to the active site.

It belongs to the CarA family. Composed of two chains; the small (or glutamine) chain promotes the hydrolysis of glutamine to ammonia, which is used by the large (or ammonia) chain to synthesize carbamoyl phosphate. Tetramer of heterodimers (alpha,beta)4.

The catalysed reaction is hydrogencarbonate + L-glutamine + 2 ATP + H2O = carbamoyl phosphate + L-glutamate + 2 ADP + phosphate + 2 H(+). It catalyses the reaction L-glutamine + H2O = L-glutamate + NH4(+). It participates in amino-acid biosynthesis; L-arginine biosynthesis; carbamoyl phosphate from bicarbonate: step 1/1. The protein operates within pyrimidine metabolism; UMP biosynthesis via de novo pathway; (S)-dihydroorotate from bicarbonate: step 1/3. In terms of biological role, small subunit of the glutamine-dependent carbamoyl phosphate synthetase (CPSase). CPSase catalyzes the formation of carbamoyl phosphate from the ammonia moiety of glutamine, carbonate, and phosphate donated by ATP, constituting the first step of 2 biosynthetic pathways, one leading to arginine and/or urea and the other to pyrimidine nucleotides. The small subunit (glutamine amidotransferase) binds and cleaves glutamine to supply the large subunit with the substrate ammonia. This Oceanobacillus iheyensis (strain DSM 14371 / CIP 107618 / JCM 11309 / KCTC 3954 / HTE831) protein is Carbamoyl phosphate synthase small chain.